We begin with the raw amino-acid sequence, 354 residues long: MLSNLRILLNNAALRKGHTSVVRHFWCGKPVQSQVQLKGRDLLTLKNFTGEEIQYMLWLSADLKFRIKQKGEYLPLLQGKSLGMIFEKRSTRTRLSTETGFALLGGHPSFLTTQDIHLGVNESLTDTARVLSSMTDAVLARVYKQSDLDTLAKEASIPIVNGLSDLYHPIQILADYLTLQEHYGSLKGLTLSWIGDGNNILHSIMMSAAKFGMHLQAATPKGYEPDPNIVKLAEQYAKENGTKLSMTNDPLEAARGGNVLITDTWISMGQEDEKKKRLQAFQGYQVTMKTAKVAASDWTFLHCLPRKPEEVDDEVFYSPRSLVFPEAENRKWTIMAVMVSLLTDYSPVLQKPKF.

The N-terminal 32 residues, 1–32 (MLSNLRILLNNAALRKGHTSVVRHFWCGKPVQ), are a transit peptide targeting the mitochondrion. Lysine 70 bears the N6-acetyllysine; alternate mark. N6-succinyllysine; alternate is present on lysine 70. Position 80 is an N6-succinyllysine (lysine 80). At lysine 88 the chain carries N6-acetyllysine; alternate. Lysine 88 is modified (N6-succinyllysine; alternate). Carbamoyl phosphate is bound at residue 90-94 (STRTR). Residue serine 133 is modified to Phosphoserine. Residue arginine 141 participates in carbamoyl phosphate binding. Arginine 141 is a binding site for L-ornithine. N6-acetyllysine; alternate is present on lysine 144. At lysine 144 the chain carries N6-succinyllysine; alternate. Histidine 168 contacts carbamoyl phosphate. Residue asparagine 199 coordinates L-ornithine. An N6-acetyllysine; alternate mark is found at lysine 221, lysine 231, and lysine 238. N6-succinyllysine; alternate is present on residues lysine 221, lysine 231, and lysine 238. Residue lysine 243 is modified to N6-acetyllysine. 263 to 267 (DTWIS) contacts L-ornithine. Residues lysine 274 and lysine 289 each carry the N6-succinyllysine modification. The residue at position 292 (lysine 292) is an N6-acetyllysine; alternate. Position 292 is an N6-succinyllysine; alternate (lysine 292). L-ornithine is bound at residue 302-305 (HCLP). Cysteine 303 is a catalytic residue. The residue at position 307 (lysine 307) is an N6-acetyllysine; alternate. Lysine 307 carries the N6-succinyllysine; alternate modification. Arginine 330 contacts carbamoyl phosphate. An L-ornithine-binding site is contributed by arginine 330.

Belongs to the aspartate/ornithine carbamoyltransferase superfamily. OTCase family. As to quaternary structure, homotrimer. Post-translationally, acetylation at Lys-88 negatively regulates ornithine carbamoyltransferase activity in response to nutrient signals.

It localises to the mitochondrion matrix. The enzyme catalyses carbamoyl phosphate + L-ornithine = L-citrulline + phosphate + H(+). Its pathway is nitrogen metabolism; urea cycle; L-citrulline from L-ornithine and carbamoyl phosphate: step 1/1. Negatively regulated by lysine acetylation. In terms of biological role, catalyzes the second step of the urea cycle, the condensation of carbamoyl phosphate with L-ornithine to form L-citrulline. The urea cycle ensures the detoxification of ammonia by converting it to urea for excretion. This is Ornithine transcarbamylase, mitochondrial from Mus musculus (Mouse).